The chain runs to 359 residues: 4-hydroxy-3-methylbut-2-en-1-yl diphosphate synthase (flavodoxin) (359 aa).

Residues cysteine 264, cysteine 267, cysteine 299, and glutamate 306 each contribute to the [4Fe-4S] cluster site.

Belongs to the IspG family. The cofactor is [4Fe-4S] cluster.

The enzyme catalyses (2E)-4-hydroxy-3-methylbut-2-enyl diphosphate + oxidized [flavodoxin] + H2O + 2 H(+) = 2-C-methyl-D-erythritol 2,4-cyclic diphosphate + reduced [flavodoxin]. Its pathway is isoprenoid biosynthesis; isopentenyl diphosphate biosynthesis via DXP pathway; isopentenyl diphosphate from 1-deoxy-D-xylulose 5-phosphate: step 5/6. In terms of biological role, converts 2C-methyl-D-erythritol 2,4-cyclodiphosphate (ME-2,4cPP) into 1-hydroxy-2-methyl-2-(E)-butenyl 4-diphosphate. The polypeptide is 4-hydroxy-3-methylbut-2-en-1-yl diphosphate synthase (flavodoxin) (Helicobacter pylori (strain Shi470)).